Here is a 380-residue protein sequence, read N- to C-terminus: Erythronate-4-phosphate dehydrogenase (380 aa).

The substrate site is built by serine 45 and threonine 66. NAD(+) contacts are provided by residues 126 to 127 (QV), aspartate 146, threonine 174, 205 to 207 (ASR), and aspartate 231. Arginine 207 is a catalytic residue. Glutamate 236 is an active-site residue. Histidine 253 functions as the Proton donor in the catalytic mechanism. Glycine 256 contacts NAD(+). Tyrosine 257 is a substrate binding site.

This sequence belongs to the D-isomer specific 2-hydroxyacid dehydrogenase family. PdxB subfamily. As to quaternary structure, homodimer.

The protein resides in the cytoplasm. The enzyme catalyses 4-phospho-D-erythronate + NAD(+) = (R)-3-hydroxy-2-oxo-4-phosphooxybutanoate + NADH + H(+). The protein operates within cofactor biosynthesis; pyridoxine 5'-phosphate biosynthesis; pyridoxine 5'-phosphate from D-erythrose 4-phosphate: step 2/5. Functionally, catalyzes the oxidation of erythronate-4-phosphate to 3-hydroxy-2-oxo-4-phosphonooxybutanoate. The chain is Erythronate-4-phosphate dehydrogenase from Pseudomonas savastanoi pv. phaseolicola (strain 1448A / Race 6) (Pseudomonas syringae pv. phaseolicola (strain 1448A / Race 6)).